Consider the following 184-residue polypeptide: MANVVDQSKEQMKKSVESTKENFAGIRTGRANPALLNGIVVEYYGAPTPLKHVATIGVPEPRTLSVTPFDPSQANAVEKALRDSDLGASPRRNGSAILLTMPELTEDRRKEYVKLAKSKAEDGKVAVRNIRRKSKEAIDKAVKDGEMGEDEGDRLLKELDKVTKATTDELDALLEAKQKEIMEV.

The protein belongs to the RRF family.

It localises to the cytoplasm. Responsible for the release of ribosomes from messenger RNA at the termination of protein biosynthesis. May increase the efficiency of translation by recycling ribosomes from one round of translation to another. The polypeptide is Ribosome-recycling factor (Bifidobacterium animalis subsp. lactis (strain AD011)).